Reading from the N-terminus, the 340-residue chain is Solute-binding protein Dde_0634 (340 aa).

The signal sequence occupies residues 1-29 (MKSTFAALLIMVGCLVSGALLTGSEAAAA). (indol-3-yl)acetate contacts are provided by residues Tyr-99, Arg-172, 210-213 (TSLD), and Tyr-235.

The protein belongs to the bacterial solute-binding protein 7 family. In terms of assembly, the complex is comprised of an extracytoplasmic solute-binding protein and a heteromeric permease formed by two transmembrane proteins.

It localises to the periplasm. Its function is as follows. Solute-binding protein that binds indole-3-pyruvate and indole-3-acetate (in vitro). Can also bind D-tryptophan (in vitro), but that is probably not a physiological ligand. Probably part of a tripartite ATP-independent periplasmic (TRAP) transport system that mediates solute transport into the cytoplasm. This is Solute-binding protein Dde_0634 from Oleidesulfovibrio alaskensis (strain ATCC BAA-1058 / DSM 17464 / G20) (Desulfovibrio alaskensis).